The sequence spans 797 residues: Plakophilin-3 (797 aa).

The tract at residues 58–81 (GQQSRHNGSAELDGSAESARGMPR) is disordered. Arginine 81 carries the post-translational modification Omega-N-methylarginine. Residues serine 123, serine 180, and serine 183 each carry the phosphoserine modification. Tyrosine 195 carries the post-translational modification Phosphotyrosine. Low complexity predominate over residues 219–228 (ASSGSSRAGG). The tract at residues 219-241 (ASSGSSRAGGLDWPEATEGPPSR) is disordered. At serine 240 the chain carries Phosphoserine. A Phosphothreonine modification is found at threonine 250. Residues 253 to 274 (RFQSSHRSRGGTGSVSGAGLEP) form a disordered region. Arginine 261 bears the Omega-N-methylarginine mark. The segment at 283–288 (SLSLSL) is required for interaction with SFN. Serine 285, serine 313, serine 314, and serine 331 each carry phosphoserine. Residues 294–724 (LPDVRGLDSY…AEVLVNIIAV (431 aa)) form a required for interaction with GSK3B region. 8 ARM repeats span residues 305-348 (GHRT…HRCY), 351-390 (AAAK…NLIY), 393-432 (VDNK…NLSS), 449-487 (TDLV…NLSS), 491-536 (ATRQ…NLSY), 596-637 (PKGL…NITA), 645-684 (VLSR…NLSR), and 689-730 (KDEM…NLVV). The segment at 516-797 (VGKCEDKSVE…GYRKEDFLGP (282 aa)) is required for binding to PKP2 mRNA.

The protein belongs to the beta-catenin family. As to quaternary structure, found in a complex composed of CDH1, RAP1A and PKP3; PKP3 acts as a scaffold protein within the complex, the complex is required for CDH1 localization to mature desmosome cell junctions. Interacts with FXR1; the interaction facilitates the binding of PKP3 to PKP2 mRNA. Interacts (via ARM repeats) with GSK3B; the interaction may be involved in PKP3 protein degradation. Interacts with hyperphosphorylated and hypophosphorylated RB1; the interaction inhibits RB1 interaction with and repression of the transcription factor E2F1, potentially via sequestering RB1 to the cytoplasm. Interacts with CDKN1A; the interaction sequesters CDKN1A to the cytoplasm thereby repressing its role as an inhibitor of CDK4- and CDK6-driven RB1 phosphorylation. Interacts (via N-terminus) with SFN; the interaction maintains the cytoplasmic pool of PKP3, facilitates PKP3 exchange at desmosomes and restricts PKP3 localization to existing desmosome cell junctions. Interacts (via N-terminus) with JUP; the interaction is required for PKP3 localization to desmosome cell-cell junctions. Post-translationally, phosphorylated at Ser-285 when localized to the cytoplasm, PKP3 at desmosome cell junctions is not phosphorylated. Phosphorylation at Try-195 by SRC is induced by reactive oxygen species and potentially acts as a release mechanism from desmosome cell-cell junctions. Expressed in all layers of the epidermis, but is most abundant in the basal layer (at protein level). Expressed in keratinocytes of the epidermis at birth (at protein level). Expressed in the anagen non-keratinized inner root sheath cuticle and hair cuticle (at protein level). Also expressed in the matrix, precursors of the inner root sheath and hair shaft lineages (at protein level). Expressed at apical membranes in the outer hair root sheath and basal layer keratinocytes (at protein level). Expressed in intestinal epithelial cells and lamina propria of the ileum (at protein level). Expressed in keratinocytes (at protein level).

The protein resides in the nucleus. Its subcellular location is the cell junction. It localises to the desmosome. It is found in the cytoplasm. The protein localises to the cell membrane. The protein resides in the adherens junction. A component of desmosome cell-cell junctions which are required for positive regulation of cellular adhesion. Required for the localization of DSG2, DSP and PKP2 to mature desmosome junctions. May also play a role in the maintenance of DSG3 protein abundance in keratinocytes. Required for the formation of DSP-containing desmosome precursors in the cytoplasm during desmosome assembly. Also regulates the accumulation of CDH1 to mature desmosome junctions, via cAMP-dependent signaling and its interaction with activated RAP1A. Positively regulates the stabilization of PKP2 mRNA and therefore protein abundance, via its interaction with FXR1, may also regulate the protein abundance of DSP via the same mechanism. May also regulate the protein abundance of the desmosome component PKP1. Required for the organization of desmosome junctions at intercellular borders between basal keratinocytes of the epidermis, as a result plays a role in maintenance of the dermal barrier and regulation of the dermal inflammatory response. Required during epidermal keratinocyte differentiation for cell adherence at tricellular cell-cell contacts, via regulation of the timely formation of adherens junctions and desmosomes in a calcium-dependent manner, and may also play a role in the organization of the intracellular actin fiber belt. Acts as a negative regulator of the inflammatory response in hematopoietic cells of the skin and intestine, via modulation of proinflammatory cytokine production. Important for epithelial barrier maintenance in the intestine to reduce intestinal permeability, thereby plays a role in protection from intestinal-derived endotoxemia. Required for the development of hair follicles, via a role in the regulation of inner root sheaf length, correct alignment and anterior-posterior polarity of hair follicles. Promotes proliferation and cell-cycle G1/S phase transition of keratinocytes. Promotes E2F1-driven transcription of G1/S phase promoting genes by acting to release E2F1 from its inhibitory interaction with RB1, via sequestering RB1 and CDKN1A to the cytoplasm and thereby increasing CDK4- and CDK6-driven phosphorylation of RB1. May act as a scaffold protein to facilitate MAPK phosphorylation of RPS6KA protein family members and subsequently promote downstream EGFR signaling. May play a role in the positive regulation of transcription of Wnt-mediated TCF-responsive target genes. This chain is Plakophilin-3 (Pkp3), found in Mus musculus (Mouse).